Consider the following 109-residue polypeptide: Putative membrane protein insertion efficiency factor (109 aa).

Belongs to the UPF0161 family.

It is found in the cell inner membrane. Its function is as follows. Could be involved in insertion of integral membrane proteins into the membrane. The chain is Putative membrane protein insertion efficiency factor from Rhodopseudomonas palustris (strain BisA53).